The primary structure comprises 625 residues: 1-deoxy-D-xylulose-5-phosphate synthase (625 aa).

Thiamine diphosphate is bound by residues histidine 80 and glycine 121–serine 123. Aspartate 152 serves as a coordination point for Mg(2+). Thiamine diphosphate contacts are provided by residues glycine 153–alanine 154, asparagine 181, tyrosine 288, and glutamate 370. Asparagine 181 is a binding site for Mg(2+).

This sequence belongs to the transketolase family. DXPS subfamily. As to quaternary structure, homodimer. Mg(2+) serves as cofactor. Requires thiamine diphosphate as cofactor.

It catalyses the reaction D-glyceraldehyde 3-phosphate + pyruvate + H(+) = 1-deoxy-D-xylulose 5-phosphate + CO2. It participates in metabolic intermediate biosynthesis; 1-deoxy-D-xylulose 5-phosphate biosynthesis; 1-deoxy-D-xylulose 5-phosphate from D-glyceraldehyde 3-phosphate and pyruvate: step 1/1. Functionally, catalyzes the acyloin condensation reaction between C atoms 2 and 3 of pyruvate and glyceraldehyde 3-phosphate to yield 1-deoxy-D-xylulose-5-phosphate (DXP). In Alteromonas mediterranea (strain DSM 17117 / CIP 110805 / LMG 28347 / Deep ecotype), this protein is 1-deoxy-D-xylulose-5-phosphate synthase.